The primary structure comprises 214 residues: Acetoin utilization protein AcuB (214 aa).

2 CBS domains span residues 7–66 (MKRD…ENKR) and 78–135 (MKKD…GADQ).

Interacts with YabA.

The protein operates within ketone degradation; acetoin degradation. In terms of biological role, role in growth and sporulation on acetoin or butanediol. Involved in the breakdown of these compounds used as a carbon source. In Bacillus subtilis (strain 168), this protein is Acetoin utilization protein AcuB (acuB).